We begin with the raw amino-acid sequence, 305 residues long: MSNKDQTNLLNNLKDIAQKAGLDISEELAKINAKLESSTALSKTWERVELARHSDRPRTLDYINLIFDNFTELHGDRFFGDDPAMIGGIGFIDGMPVTVIGTQKGRNLRETIDRNGGMANPEGYRKAMRLAKQAEKFKRPIITFIDTQGAYPGLGAEERGIGEAIAFNLREFSRLKTPIICIIIGEGGSGGALGIGVGDKIYMLENAIFSVISPEGCASILLRDSSRAKDAAAMLKITSQEVLDLKVINGIIPEPEKGAHTDPKKTADAIKEQILKDLADLTKRDPAVLVKYRSKKIRSIGKYSE.

The CoA carboxyltransferase C-terminal domain maps to Ala33–Asp280.

This sequence belongs to the AccA family. In terms of assembly, acetyl-CoA carboxylase is a heterohexamer composed of biotin carboxyl carrier protein (AccB), biotin carboxylase (AccC) and two subunits each of ACCase subunit alpha (AccA) and ACCase subunit beta (AccD).

Its subcellular location is the cytoplasm. The catalysed reaction is N(6)-carboxybiotinyl-L-lysyl-[protein] + acetyl-CoA = N(6)-biotinyl-L-lysyl-[protein] + malonyl-CoA. Its pathway is lipid metabolism; malonyl-CoA biosynthesis; malonyl-CoA from acetyl-CoA: step 1/1. Its function is as follows. Component of the acetyl coenzyme A carboxylase (ACC) complex. First, biotin carboxylase catalyzes the carboxylation of biotin on its carrier protein (BCCP) and then the CO(2) group is transferred by the carboxyltransferase to acetyl-CoA to form malonyl-CoA. The sequence is that of Acetyl-coenzyme A carboxylase carboxyl transferase subunit alpha from Treponema denticola (strain ATCC 35405 / DSM 14222 / CIP 103919 / JCM 8153 / KCTC 15104).